The following is a 418-amino-acid chain: Putative ion-transport protein YfeO (418 aa).

The next 10 helical transmembrane spans lie at 15-37 (PAVA…ASVL), 57-79 (LWII…FSQG), 99-118 (ALPR…VSLG), 149-171 (ILAS…LIFS), 186-208 (LFAP…HPHF), 221-243 (TDIL…AVWC), 258-280 (VLVL…PVSL), 301-323 (YFLL…FRGG), 343-363 (VPAV…VLVV), and 376-398 (VVVP…WLLL).

The protein belongs to the chloride channel (TC 2.A.49) family.

It localises to the cell membrane. The chain is Putative ion-transport protein YfeO (yfeO) from Shigella flexneri.